We begin with the raw amino-acid sequence, 95 residues long: Aspartyl/glutamyl-tRNA(Asn/Gln) amidotransferase subunit C (95 aa).

The protein belongs to the GatC family. As to quaternary structure, heterotrimer of A, B and C subunits.

It carries out the reaction L-glutamyl-tRNA(Gln) + L-glutamine + ATP + H2O = L-glutaminyl-tRNA(Gln) + L-glutamate + ADP + phosphate + H(+). The enzyme catalyses L-aspartyl-tRNA(Asn) + L-glutamine + ATP + H2O = L-asparaginyl-tRNA(Asn) + L-glutamate + ADP + phosphate + 2 H(+). Its function is as follows. Allows the formation of correctly charged Asn-tRNA(Asn) or Gln-tRNA(Gln) through the transamidation of misacylated Asp-tRNA(Asn) or Glu-tRNA(Gln) in organisms which lack either or both of asparaginyl-tRNA or glutaminyl-tRNA synthetases. The reaction takes place in the presence of glutamine and ATP through an activated phospho-Asp-tRNA(Asn) or phospho-Glu-tRNA(Gln). This Campylobacter fetus subsp. fetus (strain 82-40) protein is Aspartyl/glutamyl-tRNA(Asn/Gln) amidotransferase subunit C.